A 202-amino-acid chain; its full sequence is Small ribosomal subunit protein uS4 (202 aa).

The disordered stretch occupies residues 22–43 (TRKSARRAYPPGQHGQNRRKRS). Residues 90 to 152 (MRLDNTVFRL…EKSKEMVKTN (63 aa)) enclose the S4 RNA-binding domain.

It belongs to the universal ribosomal protein uS4 family. Part of the 30S ribosomal subunit. Contacts protein S5. The interaction surface between S4 and S5 is involved in control of translational fidelity.

In terms of biological role, one of the primary rRNA binding proteins, it binds directly to 16S rRNA where it nucleates assembly of the body of the 30S subunit. With S5 and S12 plays an important role in translational accuracy. The protein is Small ribosomal subunit protein uS4 of Trichodesmium erythraeum (strain IMS101).